We begin with the raw amino-acid sequence, 242 residues long: Adenosine 5'-phosphosulfate reductase (242 aa).

Positions 125, 126, 208, and 211 each coordinate [4Fe-4S] cluster. The Nucleophile; cysteine thiosulfonate intermediate role is filled by Cys-234.

Belongs to the PAPS reductase family. CysH subfamily. [4Fe-4S] cluster is required as a cofactor.

The protein resides in the cytoplasm. The catalysed reaction is [thioredoxin]-disulfide + sulfite + AMP + 2 H(+) = adenosine 5'-phosphosulfate + [thioredoxin]-dithiol. It functions in the pathway sulfur metabolism; hydrogen sulfide biosynthesis; sulfite from sulfate. Functionally, catalyzes the formation of sulfite from adenosine 5'-phosphosulfate (APS) using thioredoxin as an electron donor. In Staphylococcus saprophyticus subsp. saprophyticus (strain ATCC 15305 / DSM 20229 / NCIMB 8711 / NCTC 7292 / S-41), this protein is Adenosine 5'-phosphosulfate reductase.